A 194-amino-acid chain; its full sequence is Probable GTP-binding protein EngB (194 aa).

The EngB-type G domain occupies Asp22–Met194. Residues Gly30–Ser37, Gly57–Thr61, Asp75–Gly78, Thr142–Asp145, and Phe175–Ser177 each bind GTP. Residues Ser37 and Thr59 each contribute to the Mg(2+) site.

It belongs to the TRAFAC class TrmE-Era-EngA-EngB-Septin-like GTPase superfamily. EngB GTPase family. Mg(2+) serves as cofactor.

Functionally, necessary for normal cell division and for the maintenance of normal septation. The polypeptide is Probable GTP-binding protein EngB (Lactobacillus gasseri (strain ATCC 33323 / DSM 20243 / BCRC 14619 / CIP 102991 / JCM 1131 / KCTC 3163 / NCIMB 11718 / NCTC 13722 / AM63)).